We begin with the raw amino-acid sequence, 215 residues long: Adenylate kinase (215 aa).

10 to 15 (GAGKGT) is an ATP binding site. An NMP region spans residues 30–59 (STGDMFRAAMKNNTELGRKAKSFMDNGDLV). AMP contacts are provided by residues threonine 31, arginine 36, 57-59 (DLV), 85-88 (GFPR), and glutamine 92. An LID region spans residues 126–163 (GRWICRTCGKTYHEIYNPPKVAGKCDLDGGELYQRDDD). Arginine 127 serves as a coordination point for ATP. Cysteine 130 and cysteine 133 together coordinate Zn(2+). Residue 136-137 (TY) participates in ATP binding. Residues cysteine 150 and aspartate 153 each contribute to the Zn(2+) site. AMP contacts are provided by arginine 160 and arginine 171. Glutamine 199 serves as a coordination point for ATP.

The protein belongs to the adenylate kinase family. As to quaternary structure, monomer.

It is found in the cytoplasm. The enzyme catalyses AMP + ATP = 2 ADP. The protein operates within purine metabolism; AMP biosynthesis via salvage pathway; AMP from ADP: step 1/1. Functionally, catalyzes the reversible transfer of the terminal phosphate group between ATP and AMP. Plays an important role in cellular energy homeostasis and in adenine nucleotide metabolism. The protein is Adenylate kinase of Listeria monocytogenes serotype 4a (strain HCC23).